Reading from the N-terminus, the 693-residue chain is Cleavage and polyadenylation specificity factor subunit 3-I (693 aa).

The HXHXDH motif signature appears at 81–86; it reads HFHIDH.

It belongs to the metallo-beta-lactamase superfamily. RNA-metabolizing metallo-beta-lactamase-like family. INTS11 subfamily. In terms of assembly, component of the CPSF complex, at least composed of CPSF160, CPSF100, CPSF73-I, CPSF73-II, CPSF30, FY and FIPS5. Interacts with CLPS3, CPSF100, CPSF160 and FY. In terms of tissue distribution, highly expressed in carpels. Also detected in seedlings, roots, stems, leaves, flowers and siliques.

The protein localises to the nucleus. Component of the cleavage and polyadenylation specificity factor (CPSF) complex that play a key role in pre-mRNA 3'-end formation, recognizing the AAUAAA signal sequence and interacting with poly(A) polymerase and other factors to bring about cleavage and poly(A) addition. May function as mRNA 3'-end-processing endonuclease and also be involved in the histone 3'-end pre-mRNA processing. In Arabidopsis thaliana (Mouse-ear cress), this protein is Cleavage and polyadenylation specificity factor subunit 3-I (CPSF73-I).